A 947-amino-acid polypeptide reads, in one-letter code: Serine-aspartate repeat-containing protein C (947 aa).

The first 50 residues, 1-50, serve as a signal peptide directing secretion; sequence MNNKKTATNRKGMIPNRLNKFSIRKYSVGTASILVGTTLIFGLSGHEAKA. The interval 51–164 is disordered; that stretch reads AEHTNGELNQ…STTPKTTTIK (114 aa). The segment at 51 to 495 is ligand binding A region; that stretch reads AEHTNGELNQ…GSSTANGDQK (445 aa). A compositionally biased stretch (polar residues) spans 56-71; that stretch reads GELNQSKNETTAPSEN. Residues 72-83 are compositionally biased toward basic and acidic residues; that stretch reads KTTKKVDSRQLK. Polar residues predominate over residues 84-155; the sequence is DNTQTATADQ…SNLTQAKDVS (72 aa). CNA-B domains are found at residues 496-606 and 607-717; these read KYNL…YKTP and KYSL…EEET. The disordered stretch occupies residues 678–927; that stretch reads TQTGTNTTED…NNSNNGTLFG (250 aa). 2 stretches are compositionally biased toward acidic residues: residues 685 to 695 and 712 to 886; these read TEDDKDADGGE and YYEE…DSDS. An LPXTG sorting signal motif is present at residues 910–914; the sequence is LPETG. Residues 912 to 927 show a composition bias toward low complexity; that stretch reads ETGSENNNSNNGTLFG. Residue Thr-913 is modified to Pentaglycyl murein peptidoglycan amidated threonine. A propeptide spans 914–947 (removed by sortase); sequence GSENNNSNNGTLFGGLFAALGSLLLFGRRKKQNK.

This sequence belongs to the serine-aspartate repeat-containing protein (SDr) family. In terms of assembly, homodimerizes; via N2-Domain. Interacts with host NRXN1; this interaction mediates bacterial attachment to host cells.

It localises to the secreted. The protein localises to the cell wall. Functionally, cell surface-associated calcium-binding protein which plays an important role in adhesion and pathogenesis. Mediates interactions with components of the extracellular matrix such as host NRXN1 to promote bacterial adhesion. The polypeptide is Serine-aspartate repeat-containing protein C (sdrC) (Staphylococcus aureus (strain COL)).